Here is a 23-residue protein sequence, read N- to C-terminus: CKCPSCNFNDVTENCKCCIFRQP.

Pro-4 carries the post-translational modification 4-hydroxyproline; partial. At Pro-23 the chain carries 4-hydroxyproline; partial; alternate. Pro-23 is modified (proline amide; alternate).

In terms of processing, the name as25b given in PubMed:23474143 corresponds to the hydroxylated peptide. The amidation of the C-terminus of this hydroxylated peptide is not directly confirmed. Post-translationally, contains 3 disulfide bonds. In terms of tissue distribution, expressed by the venom duct.

The protein localises to the secreted. Functionally, upon intracranial injection in mice, as25a (the toxin without the two 4-hydroxyprolines) provokes paralysis of the hind limbs and death with a dose of 240 pmol. The chain is Conotoxin as25a from Conus cancellatus (Cancellate cone).